We begin with the raw amino-acid sequence, 456 residues long: Glycerol-3-phosphate acyltransferase 4 (456 aa).

The signal sequence occupies residues 1–37 (MFLLLPFDSLIVNLLGISLTVLFTLLLVFIIVPAIFG). Helical transmembrane passes span 156-176 (ISLRLTVLWGLGVLIRYCFLL) and 180-200 (IALAFTGISLLVVGTTVVGYL). Asn-247 is a glycosylation site (N-linked (GlcNAc...) asparagine). Positions 248 to 253 (HTSPID) match the HXXXXD motif motif. N-linked (GlcNAc...) asparagine glycans are attached at residues Asn-327, Asn-328, and Asn-362.

This sequence belongs to the 1-acyl-sn-glycerol-3-phosphate acyltransferase family.

The protein localises to the endoplasmic reticulum membrane. It carries out the reaction sn-glycerol 3-phosphate + an acyl-CoA = a 1-acyl-sn-glycero-3-phosphate + CoA. The enzyme catalyses dodecanoyl-CoA + sn-glycerol 3-phosphate = 1-dodecanoyl-sn-glycerol 3-phosphate + CoA. It catalyses the reaction sn-glycerol 3-phosphate + hexadecanoyl-CoA = 1-hexadecanoyl-sn-glycero-3-phosphate + CoA. The catalysed reaction is sn-glycerol 3-phosphate + octadecanoyl-CoA = 1-octadecanoyl-sn-glycero-3-phosphate + CoA. It carries out the reaction sn-glycerol 3-phosphate + (9Z)-octadecenoyl-CoA = 1-(9Z-octadecenoyl)-sn-glycero-3-phosphate + CoA. The enzyme catalyses (9Z,12Z)-octadecadienoyl-CoA + sn-glycerol 3-phosphate = 1-(9Z,12Z)-octadecadienoyl-sn-glycero-3-phosphate + CoA. It functions in the pathway phospholipid metabolism; CDP-diacylglycerol biosynthesis; CDP-diacylglycerol from sn-glycerol 3-phosphate: step 1/3. Converts glycerol-3-phosphate to 1-acyl-sn-glycerol-3-phosphate (lysophosphatidic acid or LPA) by incorporating an acyl moiety at the sn-1 position of the glycerol backbone. Active against both saturated and unsaturated long-chain fatty acyl-CoAs. Protects cells against lipotoxicity. The polypeptide is Glycerol-3-phosphate acyltransferase 4 (Pongo abelii (Sumatran orangutan)).